A 316-amino-acid polypeptide reads, in one-letter code: Pantothenate kinase (316 aa).

95–102 (GSVAVGKS) serves as a coordination point for ATP.

Belongs to the prokaryotic pantothenate kinase family.

The protein resides in the cytoplasm. The catalysed reaction is (R)-pantothenate + ATP = (R)-4'-phosphopantothenate + ADP + H(+). It participates in cofactor biosynthesis; coenzyme A biosynthesis; CoA from (R)-pantothenate: step 1/5. The polypeptide is Pantothenate kinase (Photorhabdus laumondii subsp. laumondii (strain DSM 15139 / CIP 105565 / TT01) (Photorhabdus luminescens subsp. laumondii)).